The following is a 114-amino-acid chain: Large ribosomal subunit protein uL22 (114 aa).

It belongs to the universal ribosomal protein uL22 family. In terms of assembly, part of the 50S ribosomal subunit.

This protein binds specifically to 23S rRNA; its binding is stimulated by other ribosomal proteins, e.g. L4, L17, and L20. It is important during the early stages of 50S assembly. It makes multiple contacts with different domains of the 23S rRNA in the assembled 50S subunit and ribosome. Functionally, the globular domain of the protein is located near the polypeptide exit tunnel on the outside of the subunit, while an extended beta-hairpin is found that lines the wall of the exit tunnel in the center of the 70S ribosome. This chain is Large ribosomal subunit protein uL22, found in Streptococcus mutans serotype c (strain ATCC 700610 / UA159).